A 188-amino-acid chain; its full sequence is Putative manganese efflux pump MntP (188 aa).

6 helical membrane-spanning segments follow: residues 3–23, 41–61, 62–82, 106–128, 143–163, and 168–188; these read ISAT…ASIG, LIFG…GMLA, SQFI…FLGG, WILV…GLAF, ATLI…PLLG, and ILGG…HFAG.

Belongs to the MntP (TC 9.B.29) family.

Its subcellular location is the cell inner membrane. Probably functions as a manganese efflux pump. This is Putative manganese efflux pump MntP from Enterobacter sp. (strain 638).